The following is a 189-amino-acid chain: Potassium-transporting ATPase KdpC subunit (189 aa).

Residues 8–28 (LVMLILLTLITGIAYPLLTTG) form a helical membrane-spanning segment.

The protein belongs to the KdpC family. The system is composed of three essential subunits: KdpA, KdpB and KdpC.

The protein resides in the cell inner membrane. Its function is as follows. Part of the high-affinity ATP-driven potassium transport (or Kdp) system, which catalyzes the hydrolysis of ATP coupled with the electrogenic transport of potassium into the cytoplasm. This subunit acts as a catalytic chaperone that increases the ATP-binding affinity of the ATP-hydrolyzing subunit KdpB by the formation of a transient KdpB/KdpC/ATP ternary complex. This chain is Potassium-transporting ATPase KdpC subunit, found in Serratia proteamaculans (strain 568).